The sequence spans 216 residues: Protein Syd (216 aa).

It belongs to the Syd family.

It localises to the cell inner membrane. Its function is as follows. Interacts with the SecY protein in vivo. May bind preferentially to an uncomplexed state of SecY, thus functioning either as a chelating agent for excess SecY in the cell or as a regulatory factor that negatively controls the translocase function. This is Protein Syd from Shewanella baltica (strain OS195).